The chain runs to 332 residues: Homeobox protein DLX-2 (332 aa).

Over residues 19–28 (ASSTYHQHQQ) the composition is skewed to polar residues. Residues 19-83 (ASSTYHQHQQ…QHPAGGGGGG (65 aa)) form a disordered region. Positions 40–49 (NSNSSSSNSS) are enriched in low complexity. A compositionally biased stretch (polar residues) spans 55–75 (ESPTLPVSTATDSSYYTNQQH). The segment at residues 155–214 (VRKPRTIYSSFQLAALQRRFQKTQYLALPERAELAASLGLTQTQVKIWFQNRRSKFKKMW) is a DNA-binding region (homeobox). Disordered regions lie at residues 219 to 272 (IPTE…SSPS) and 304 to 332 (PSQT…GTIF). Serine 235 carries the phosphoserine modification. Over residues 253-266 (AGGGPGSGGGGAGS) the composition is skewed to gly residues. The segment covering 310–320 (AHHHHHHHHHA) has biased composition (basic residues).

This sequence belongs to the distal-less homeobox family. As to quaternary structure, interacts (via homeobox DNA-binding domain) with POU4F2; this interaction enhances retinal ganglion cell (RGC) differentiation. In terms of processing, phosphorylated by serine/threonine kinases. Expressed only in neural and other ectodermal structures of the head: the brain, the vomeronasal organ, and the preameloblasts of the teeth. Primarily expressed in the germinal cells of the ventral forebrain in the midgestational embryo, and in both dorsal and ventral ventricular zones in late embryogenesis and early postnatal life. Expressed in the inner nuclear layer of the retina.

It localises to the nucleus. Functionally, acts as a transcriptional activator. Activates transcription of CGA/alpha-GSU, via binding to the downstream activin regulatory element (DARE) in the gene promoter. Plays a role in terminal differentiation of interneurons, such as amacrine and bipolar cells in the developing retina. Likely to play a regulatory role in the development of the ventral forebrain. May play a role in craniofacial patterning and morphogenesis. This chain is Homeobox protein DLX-2 (Dlx2), found in Mus musculus (Mouse).